The primary structure comprises 102 residues: Small ribosomal subunit protein bS6 (102 aa).

The protein belongs to the bacterial ribosomal protein bS6 family.

Functionally, binds together with bS18 to 16S ribosomal RNA. This is Small ribosomal subunit protein bS6 from Deinococcus deserti (strain DSM 17065 / CIP 109153 / LMG 22923 / VCD115).